Consider the following 188-residue polypeptide: Protein TIFY 9 (188 aa).

A disordered region spans residues 20 to 41 (DADDRHAKSGGSSASSSSSIRG). The span at 28-38 (SGGSSASSSSS) shows a compositional bias: low complexity. Residues 80-114 (AAAAAAPMTLFYNGSVAVFDVSHDKAEAIMRMATE) enclose the Tify domain. The Jas signature appears at 135-160 (PLTRTKSLQRFLSKRKERLTSLGPYQ). Positions 156-188 (LGPYQVGGPAAVGATTSTTTKSFLAKEEEHTAS) are disordered. Residues 179 to 188 (LAKEEEHTAS) show a composition bias toward basic and acidic residues.

Belongs to the TIFY/JAZ family. Ubiquitinated. Targeted for degradation by the SCF(COI1) E3 ubiquitin ligase-proteasome pathway during jasmonate signaling.

In terms of biological role, repressor of jasmonate responses. The sequence is that of Protein TIFY 9 from Oryza sativa subsp. indica (Rice).